Consider the following 430-residue polypeptide: MKQALRVAFGFLILWASVLHAEVRIVIDSGVDSGRPIGVVPFQWAGPGAAPEDIGGIVAADLRNSGKFNPLDRARLPQQPGSAQEVQPSAWSALGIDAVVVGQVTPNPDGSYNVAYQLVDTGGAPGTVLAQNSYKVNKQWLRYAGHTASDEVFEKLTGIKGAFRTRIAYVVQTNGGQFPYELRVSDYDGYNQFVVHRSPHPLMSPAWSPDGSKLAYVTFESGRSALVIQTLANGAVRQVASFPRHNGAPAFSPDGSKLAFALSKTGSLNLYVMDLASGQIRQVTDGRSNNTEPTWFPDSQNLAFTSDLAGRPQVYKVNINGGAPQRITWEGSQNQDADVSSDGKFMVMVSSNGGQQHIAKQDLATGGVQVLSSTFLDETPSLAPNGTMVIYSSSQGMGSVLNLVSTDGRFKARLPATDGQVKFPAWSPYL.

A signal peptide spans 1-21 (MKQALRVAFGFLILWASVLHA).

It belongs to the TolB family. As to quaternary structure, the Tol-Pal system is composed of five core proteins: the inner membrane proteins TolA, TolQ and TolR, the periplasmic protein TolB and the outer membrane protein Pal. They form a network linking the inner and outer membranes and the peptidoglycan layer.

The protein localises to the periplasm. Its function is as follows. Part of the Tol-Pal system, which plays a role in outer membrane invagination during cell division and is important for maintaining outer membrane integrity. TolB occupies a key intermediary position in the Tol-Pal system because it communicates directly with both membrane-embedded components, Pal in the outer membrane and TolA in the inner membrane. The sequence is that of Tol-Pal system protein TolB from Shigella boydii serotype 4 (strain Sb227).